The chain runs to 386 residues: Succinate--CoA ligase [ADP-forming] subunit beta (386 aa).

Positions 9-244 (KEILRSYGVS…LDEEDPKEVE (236 aa)) constitute an ATP-grasp domain. Residues Lys46, 53–55 (GRG), Glu99, Cys102, and Glu107 each bind ATP. Asn199 and Asp213 together coordinate Mg(2+). Substrate is bound by residues Asn264 and 321–323 (GIM).

Belongs to the succinate/malate CoA ligase beta subunit family. In terms of assembly, heterotetramer of two alpha and two beta subunits. Mg(2+) is required as a cofactor.

The catalysed reaction is succinate + ATP + CoA = succinyl-CoA + ADP + phosphate. It catalyses the reaction GTP + succinate + CoA = succinyl-CoA + GDP + phosphate. It functions in the pathway carbohydrate metabolism; tricarboxylic acid cycle; succinate from succinyl-CoA (ligase route): step 1/1. Functionally, succinyl-CoA synthetase functions in the citric acid cycle (TCA), coupling the hydrolysis of succinyl-CoA to the synthesis of either ATP or GTP and thus represents the only step of substrate-level phosphorylation in the TCA. The beta subunit provides nucleotide specificity of the enzyme and binds the substrate succinate, while the binding sites for coenzyme A and phosphate are found in the alpha subunit. In Geobacillus kaustophilus (strain HTA426), this protein is Succinate--CoA ligase [ADP-forming] subunit beta.